The primary structure comprises 172 residues: Ubiquitin-conjugating enzyme E2 PEX4 (172 aa).

The 154-residue stretch at 14-167 folds into the UBC core domain; it reads SASKRLIKEL…VELWCQDSDS (154 aa). The Glycyl thioester intermediate role is filled by cysteine 104.

The protein belongs to the ubiquitin-conjugating enzyme family.

The catalysed reaction is S-ubiquitinyl-[E1 ubiquitin-activating enzyme]-L-cysteine + [E2 ubiquitin-conjugating enzyme]-L-cysteine = [E1 ubiquitin-activating enzyme]-L-cysteine + S-ubiquitinyl-[E2 ubiquitin-conjugating enzyme]-L-cysteine.. Its pathway is protein modification; protein ubiquitination. Its function is as follows. Ubiquitin-conjugating enzyme E2 that is essential for peroxisome biogenesis and plays a key role in development, pathogenicity, and cell wall integrity. Required for long and very long-chain fatty acid utilization and is involved in lipid droplet accumulation and the elimination of reactive oxygen species. Controls the expression of proteins involved in protein biosynthesis, fatty acid metabolism, cell wall synthesis, oxidation-reduction reactions, as well as of the enzymes involved in the biosynthesis of the mycotoxin deoxynivalenol (DON), including TRI5, TRI6, and TRI10. This Gibberella zeae (strain ATCC MYA-4620 / CBS 123657 / FGSC 9075 / NRRL 31084 / PH-1) (Wheat head blight fungus) protein is Ubiquitin-conjugating enzyme E2 PEX4.